The primary structure comprises 519 residues: ATP synthase subunit alpha (519 aa).

174–181 (GDRQTGKT) provides a ligand contact to ATP.

It belongs to the ATPase alpha/beta chains family. F-type ATPases have 2 components, CF(1) - the catalytic core - and CF(0) - the membrane proton channel. CF(1) has five subunits: alpha(3), beta(3), gamma(1), delta(1), epsilon(1). CF(0) has three main subunits: a(1), b(2) and c(9-12). The alpha and beta chains form an alternating ring which encloses part of the gamma chain. CF(1) is attached to CF(0) by a central stalk formed by the gamma and epsilon chains, while a peripheral stalk is formed by the delta and b chains.

The protein localises to the cell inner membrane. It carries out the reaction ATP + H2O + 4 H(+)(in) = ADP + phosphate + 5 H(+)(out). Functionally, produces ATP from ADP in the presence of a proton gradient across the membrane. The alpha chain is a regulatory subunit. In Acidovorax ebreus (strain TPSY) (Diaphorobacter sp. (strain TPSY)), this protein is ATP synthase subunit alpha.